A 692-amino-acid chain; its full sequence is UvrABC system protein C (692 aa).

Positions 16-95 (ETPGVYRFRD…IKEFDPRFNV (80 aa)) constitute a GIY-YIG domain. The 36-residue stretch at 208 to 243 (GRYLRRLEREMRAAAEAQEYERAARLRDDIGALRRA) folds into the UVR domain. The segment at 492–511 (GELEEYPGAPTGDDEAPETG) is disordered.

This sequence belongs to the UvrC family. In terms of assembly, interacts with UvrB in an incision complex.

Its subcellular location is the cytoplasm. Its function is as follows. The UvrABC repair system catalyzes the recognition and processing of DNA lesions. UvrC both incises the 5' and 3' sides of the lesion. The N-terminal half is responsible for the 3' incision and the C-terminal half is responsible for the 5' incision. The sequence is that of UvrABC system protein C from Parafrankia sp. (strain EAN1pec).